The chain runs to 658 residues: Protein teflon (658 aa).

The segment at 33 to 56 (LYCHFCRDLFTQLPEFLRHLQSNH) adopts a C2H2-type 1 zinc-finger fold. Residues 80-131 (DKAHEDAQSAGHNSSSGDSRSLMNSEDSRAIDGSEENSDNSPVKPEQIGKQN) form a disordered region. Polar residues predominate over residues 89–104 (AGHNSSSGDSRSLMNS). C2H2-type zinc fingers lie at residues 608–630 (YFCK…LISH) and 634–657 (FQCT…RNAH).

It belongs to the Teflon family.

It is found in the nucleus. Its subcellular location is the chromosome. In terms of biological role, specifically required in males for proper segregation of autosomal bivalents at meiosis I. Expression is required in the male germ line prior to spermatocyte stage S4. May have a role as a bridging molecule maintaining adhesion to hold autosome bivalents together via heterochromatic connections. This is Protein teflon from Drosophila simulans (Fruit fly).